Reading from the N-terminus, the 69-residue chain is Cell division protein ZapB (69 aa).

The stretch at 3–60 (LELFNQLEQKVQNAVETIEMLKMEAEELREENTRLKQERDEWERRLNGLLGKFQEIED) forms a coiled coil.

This sequence belongs to the ZapB family. Homodimer. The ends of the coiled-coil dimer bind to each other, forming polymers. Interacts with FtsZ.

It is found in the cytoplasm. Non-essential, abundant cell division factor that is required for proper Z-ring formation. It is recruited early to the divisome by direct interaction with FtsZ, stimulating Z-ring assembly and thereby promoting cell division earlier in the cell cycle. Its recruitment to the Z-ring requires functional FtsA or ZipA. This Chromohalobacter salexigens (strain ATCC BAA-138 / DSM 3043 / CIP 106854 / NCIMB 13768 / 1H11) protein is Cell division protein ZapB.